Here is a 579-residue protein sequence, read N- to C-terminus: Glucose starvation modulator protein 1 (579 aa).

A DNA-binding region (zn(2)-C6 fungal-type) is located at residues 20–48 (CVFCHEKHLQCDLGRPCQNCSKRGIGDTC). Residues 43-53 (GIGDTCRDKER) are compositionally biased toward basic and acidic residues. Disordered regions lie at residues 43-75 (GIGD…STKS) and 319-342 (QMAS…GETV). Residues 54 to 64 (KPRKRGPRKVK) are compositionally biased toward basic residues. Residues 330-339 (NDTSPESQGG) show a composition bias toward polar residues. Residues 444 to 516 (LLEYESMAKL…DIFHEYLAFG (73 aa)) enclose the PAS domain.

It belongs to the ERT1/acuK family.

Its subcellular location is the nucleus. In terms of biological role, transcription factor which regulates nonfermentable carbon utilization. This Kluyveromyces lactis (strain ATCC 8585 / CBS 2359 / DSM 70799 / NBRC 1267 / NRRL Y-1140 / WM37) (Yeast) protein is Glucose starvation modulator protein 1 (GSM1).